We begin with the raw amino-acid sequence, 279 residues long: Large ribosomal subunit protein uL2 (279 aa).

2 disordered regions span residues 32-58 (SLLT…GGGH) and 223-279 (GVAM…RKRG). Basic residues-rich tracts occupy residues 40-58 (KGGR…GGGH) and 269-279 (VRRRYATRKRG).

Belongs to the universal ribosomal protein uL2 family. As to quaternary structure, part of the 50S ribosomal subunit. Forms a bridge to the 30S subunit in the 70S ribosome.

Its function is as follows. One of the primary rRNA binding proteins. Required for association of the 30S and 50S subunits to form the 70S ribosome, for tRNA binding and peptide bond formation. It has been suggested to have peptidyltransferase activity; this is somewhat controversial. Makes several contacts with the 16S rRNA in the 70S ribosome. This is Large ribosomal subunit protein uL2 from Salinispora tropica (strain ATCC BAA-916 / DSM 44818 / JCM 13857 / NBRC 105044 / CNB-440).